The chain runs to 251 residues: Derlin-1 (251 aa).

Position 2 is an N-acetylserine (Ser2). The Cytoplasmic portion of the chain corresponds to 2–15 (SDIGDWFRSIPAIT). A helical membrane pass occupies residues 16–31 (RYWFAATVAVPLVGKL). At 32 to 69 (GLISPAYLFLWPEAFLYRFQIWRPITATFYFPVGPGTG) the chain is on the lumenal side. A helical transmembrane segment spans residues 70 to 89 (FLYLVNLYFLYHYSTRLETG). At 90 to 94 (AFDGR) the chain is on the cytoplasmic side. Residues 95-115 (PADYLFMLLFNWICIVITGLA) form a helical membrane-spanning segment. The Lumenal segment spans residues 116-122 (MDMQLLM). A helical membrane pass occupies residues 123–137 (IPLIMSVLYVWAQLN). The Cytoplasmic portion of the chain corresponds to 138–154 (RDMIVSFWFGTRFKACY). A helical transmembrane segment spans residues 155 to 166 (LPWVILGFNYII). At 167–170 (GGSV) the chain is on the lumenal side. Residues 171 to 189 (INELIGNLVGHLYFFLMFR) traverse the membrane as a helical segment. Residues 190-251 (YPMDLGGRNF…WGQGFRLGDQ (62 aa)) lie on the Cytoplasmic side of the membrane. Ser201 is modified (phosphoserine). Phosphothreonine is present on Thr202. A Phosphoserine modification is found at Ser226. The tract at residues 229-251 (RAADQNGGGGRHNWGQGFRLGDQ) is disordered. The SHP-box motif lies at 241–248 (NWGQGFRL).

Belongs to the derlin family. As to quaternary structure, homotetramer. The four subunits of the tetramer are arranged in a twofold symmetry. Forms homo- and heterooligomers with DERL2 and DERL3; binding to DERL3 is poorer than that between DERL2 and DERL3. Interacts (via SHP-box motif) with VCP. Interacts with AMFR, SELENOS, SEL1L, SELENOK and SYVN1, as well as with SEL1L-SYVN1 and VCP-SELENOS protein complexes; this interaction is weaker than that observed between DERL2 and these complexes. Interacts with NGLY1 and YOD1. Does not bind to EDEM1. Interacts with DNAJB9. Interacts with RNF103. Interacts with HM13. Interacts with XBP1 isoform 1 (via luminal/ectodomain domain); the interaction obviates the need for ectodomain shedding prior HM13/SPP-mediated XBP1 isoform 1 cleavage. Interacts with the signal recognition particle/SRP and the SRP receptor; in the process of endoplasmic reticulum stress-induced pre-emptive quality control. May interact with UBXN6. Interacts with ZFAND2B; probably through VCP. Interacts with CCDC47. Interacts with C18orf32. May interact with TRAM1. Forms a complex with SVIP and VCP/p97.

It localises to the endoplasmic reticulum membrane. Functionally, functional component of endoplasmic reticulum-associated degradation (ERAD) for misfolded lumenal proteins. Forms homotetramers which encircle a large channel traversing the endoplasmic reticulum (ER) membrane. This allows the retrotranslocation of misfolded proteins from the ER into the cytosol where they are ubiquitinated and degraded by the proteasome. The channel has a lateral gate within the membrane which provides direct access to membrane proteins with no need to reenter the ER lumen first. May mediate the interaction between VCP and the misfolded protein. Also involved in endoplasmic reticulum stress-induced pre-emptive quality control, a mechanism that selectively attenuates the translocation of newly synthesized proteins into the endoplasmic reticulum and reroutes them to the cytosol for proteasomal degradation. By controlling the steady-state expression of the IGF1R receptor, indirectly regulates the insulin-like growth factor receptor signaling pathway. The sequence is that of Derlin-1 from Pongo abelii (Sumatran orangutan).